A 363-amino-acid chain; its full sequence is Exopolygalacturonase rpg13 (363 aa).

Residues 1-26 form the signal peptide; sequence MVKFLSLTSSVTALLLLSLGANGVAA. 3 N-linked (GlcNAc...) asparagine glycosylation sites follow: Asn-121, Asn-142, and Asn-150. PbH1 repeat units follow at residues 143–173, 174–195, 197–217, 227–248, and 256–277; these read ATDVLINNITLHTASTSSLRPKNTDALDVSR, SSNVVFQNSKLTVGDDCLAINE, VTNVTLSKITCNGGHGFSVGS, VKTVRIHDSVCNDCQNGVRIKT, and VSDIKFNNVELNNVENPILITT. Catalysis depends on Asp-188, which acts as the Proton donor. Cys-190 and Cys-207 are oxidised to a cystine. Residue Asn-199 is glycosylated (N-linked (GlcNAc...) asparagine). The active site involves His-211. A glycan (N-linked (GlcNAc...) asparagine) is linked at Asn-321. Cys-322 and Cys-328 are disulfide-bonded. Residues 328-354 form a PbH1 6 repeat; sequence CTDFTLSGVKITKASNTPKNVCVNLDG.

This sequence belongs to the glycosyl hydrolase 28 family. Post-translationally, N-glycosylated.

The protein resides in the secreted. The enzyme catalyses [(1-&gt;4)-alpha-D-galacturonosyl](n) + H2O = alpha-D-galacturonate + [(1-&gt;4)-alpha-D-galacturonosyl](n-1). Functionally, specific in hydrolyzing the terminal glycosidic bond of polygalacturonic acid and oligogalacturonates. Has no activity towards trigalacturonic acid. The polypeptide is Exopolygalacturonase rpg13 (Rhizopus delemar (strain RA 99-880 / ATCC MYA-4621 / FGSC 9543 / NRRL 43880) (Mucormycosis agent)).